The chain runs to 1164 residues: Toxin subunit YenA1 (1164 aa).

The disordered stretch occupies residues 106–131 (RLEKSNSPLVPQTSSSTDASSESQTN). The span at 118–130 (TSSSTDASSESQT) shows a compositional bias: low complexity.

Semipurified toxin complex consists of at least YenA1, YenA2, YenB, YenC1, YenC2, Chi1 and Chi2. The Yen-TC:K9 subcomplex is about 26 nm tall and 22 nm in diameter with 5-fold symmetry and 5 copies of YenA1, YenA2, Chi1 and Chi2; the chitinase subunits may be solvent accessible on the exterior the complex. The Yen-TC:K9 subcomplex has no insecticidal activity. The native complex with additional YenB, YenC1 and YenC2 subunits is 16 nm taller and is insecticidal; the toxicity-conferring subunits are present at about 1 copy each.

The protein localises to the secreted. Toxin complex is secreted when grown at 25 degrees Celsius or less; at higher temperatures the proteins are present intracellularly but not secreted. Functionally, part of an orally active toxin complex (TC) with strong insecticidal effects on larvae of the Coleoptera Costelytra zealandica, Acrossidius tasmania and Adoryphorus couloni and some Lepidoptera larvae. The TC has an endochitinase activity. This chain is Toxin subunit YenA1, found in Yersinia entomophaga.